The primary structure comprises 429 residues: Histidinol dehydrogenase (429 aa).

NAD(+)-binding residues include Tyr-127, Gln-188, and Asn-211. Residues Ser-234, Gln-256, and His-259 each coordinate substrate. Positions 256 and 259 each coordinate Zn(2+). Active-site proton acceptor residues include Glu-324 and His-325. 4 residues coordinate substrate: His-325, Asp-358, Glu-412, and His-417. Asp-358 serves as a coordination point for Zn(2+). Position 417 (His-417) interacts with Zn(2+).

Belongs to the histidinol dehydrogenase family. The cofactor is Zn(2+).

The enzyme catalyses L-histidinol + 2 NAD(+) + H2O = L-histidine + 2 NADH + 3 H(+). The protein operates within amino-acid biosynthesis; L-histidine biosynthesis; L-histidine from 5-phospho-alpha-D-ribose 1-diphosphate: step 9/9. Catalyzes the sequential NAD-dependent oxidations of L-histidinol to L-histidinaldehyde and then to L-histidine. This chain is Histidinol dehydrogenase, found in Bacillus cereus (strain ATCC 10987 / NRS 248).